We begin with the raw amino-acid sequence, 728 residues long: Pre-mRNA-splicing ATP-dependent RNA helicase prp-28 (728 aa).

The disordered stretch occupies residues 19-155; it reads KKEEEAAAAK…NDEAELRARY (137 aa). Basic and acidic residues-rich tracts occupy residues 33-59, 109-125, and 137-153; these read PKKE…EEAK, RDYR…DRNQ, and EEKR…ELRA. The short motif at 293–321 is the Q motif element; the sequence is RSWEESTLPRRLLDIVKNVGYDEPTPIQR. Residues 324–527 form the Helicase ATP-binding domain; sequence IPIALQARDL…KKYLRRPAIV (204 aa). 337-344 contributes to the ATP binding site; the sequence is AVTGSGKT. The short motif at 450–453 is the DEAD box element; the sequence is DEAD. The Helicase C-terminal domain maps to 538 to 701; that stretch reads TVEQRVEFVS…KVPDELRRHE (164 aa). A disordered region spans residues 692-728; that stretch reads KVPDELRRHEAAQNKPQKGQKKLEESNGYSGKGGSWN. Positions 693 to 703 are enriched in basic and acidic residues; it reads VPDELRRHEAA.

The protein belongs to the DEAD box helicase family. DDX23/PRP28 subfamily. Component of the U5 snRNP complex.

It localises to the cytoplasm. It is found in the nucleus. It catalyses the reaction ATP + H2O = ADP + phosphate + H(+). ATP-dependent RNA helicase involved in mRNA splicing. May destabilize the U1/5'-splice site duplex to permit an effective competition for the 5'-splice site by the U6 snRNA, resulting in the switch between U1 and U6 at the 5'-splice site. May also act to unwind the U4/U6 base-pairing interaction in the U4/U6/U5 snRNP, facilitating the first covalent step of splicing. The polypeptide is Pre-mRNA-splicing ATP-dependent RNA helicase prp-28 (prp-28) (Neurospora crassa (strain ATCC 24698 / 74-OR23-1A / CBS 708.71 / DSM 1257 / FGSC 987)).